Reading from the N-terminus, the 258-residue chain is Triosephosphate isomerase (258 aa).

11-13 (NWK) is a substrate binding site. His101 acts as the Electrophile in catalysis. Glu173 serves as the catalytic Proton acceptor. Residues Gly179, Ser219, and 240-241 (GG) contribute to the substrate site.

It belongs to the triosephosphate isomerase family. As to quaternary structure, homodimer.

Its subcellular location is the cytoplasm. The catalysed reaction is D-glyceraldehyde 3-phosphate = dihydroxyacetone phosphate. It participates in carbohydrate biosynthesis; gluconeogenesis. It functions in the pathway carbohydrate degradation; glycolysis; D-glyceraldehyde 3-phosphate from glycerone phosphate: step 1/1. In terms of biological role, involved in the gluconeogenesis. Catalyzes stereospecifically the conversion of dihydroxyacetone phosphate (DHAP) to D-glyceraldehyde-3-phosphate (G3P). This chain is Triosephosphate isomerase, found in Streptomyces avermitilis (strain ATCC 31267 / DSM 46492 / JCM 5070 / NBRC 14893 / NCIMB 12804 / NRRL 8165 / MA-4680).